The primary structure comprises 471 residues: Cysteine--tRNA ligase (471 aa).

Cys-29 serves as a coordination point for Zn(2+). The 'HIGH' region signature appears at 31 to 41 (PTVYNYIHIGN). Positions 209, 234, and 238 each coordinate Zn(2+). A 'KMSKS' region motif is present at residues 266-270 (KMSKS). Lys-269 serves as a coordination point for ATP.

This sequence belongs to the class-I aminoacyl-tRNA synthetase family. In terms of assembly, monomer. Requires Zn(2+) as cofactor.

The protein localises to the cytoplasm. It carries out the reaction tRNA(Cys) + L-cysteine + ATP = L-cysteinyl-tRNA(Cys) + AMP + diphosphate. This is Cysteine--tRNA ligase from Listeria innocua serovar 6a (strain ATCC BAA-680 / CLIP 11262).